The primary structure comprises 79 residues: Dolichyl-diphosphooligosaccharide--protein glycosyltransferase subunit TMEM258 (79 aa).

2 consecutive transmembrane segments (helical) span residues 17 to 37 and 55 to 75; these read VFPH…AWFF and LISL…LLWV.

It belongs to the OST5 family. In terms of assembly, component of the oligosaccharyltransferase (OST) complex.

The protein resides in the membrane. It is found in the endoplasmic reticulum. The protein localises to the cytoplasm. The protein operates within protein modification; protein glycosylation. In terms of biological role, subunit of the oligosaccharyl transferase (OST) complex that catalyzes the initial transfer of a defined glycan (Glc(3)Man(9)GlcNAc(2) in eukaryotes) from the lipid carrier dolichol-pyrophosphate to an asparagine residue within an Asn-X-Ser/Thr consensus motif in nascent polypeptide chains, the first step in protein N-glycosylation. N-glycosylation occurs cotranslationally and the complex associates with the Sec61 complex at the channel-forming translocon complex that mediates protein translocation across the endoplasmic reticulum (ER). All subunits are required for a maximal enzyme activity. The sequence is that of Dolichyl-diphosphooligosaccharide--protein glycosyltransferase subunit TMEM258 from Gallus gallus (Chicken).